The following is a 119-amino-acid chain: Promotilin (119 aa).

The signal sequence occupies residues 1 to 25 (MVSRKAVVVLLVVHAAAMLASHTEA). The disordered stretch occupies residues 40-72 (EKERNKGQKKSLSVQQASEELGPLDPSEPTKEE).

It belongs to the motilin family.

It localises to the secreted. Plays an important role in the regulation of interdigestive gastrointestinal motility and indirectly causes rhythmic contraction of duodenal and colonic smooth muscle. This is Promotilin (MLN) from Sus scrofa (Pig).